The primary structure comprises 257 residues: Deoxyribose-phosphate aldolase (257 aa).

Asp102 serves as the catalytic Proton donor/acceptor. The active-site Schiff-base intermediate with acetaldehyde is Lys166. Lys198 functions as the Proton donor/acceptor in the catalytic mechanism.

The protein belongs to the DeoC/FbaB aldolase family. DeoC type 2 subfamily.

It is found in the cytoplasm. The enzyme catalyses 2-deoxy-D-ribose 5-phosphate = D-glyceraldehyde 3-phosphate + acetaldehyde. Its pathway is carbohydrate degradation; 2-deoxy-D-ribose 1-phosphate degradation; D-glyceraldehyde 3-phosphate and acetaldehyde from 2-deoxy-alpha-D-ribose 1-phosphate: step 2/2. Its function is as follows. Catalyzes a reversible aldol reaction between acetaldehyde and D-glyceraldehyde 3-phosphate to generate 2-deoxy-D-ribose 5-phosphate. This Shewanella sediminis (strain HAW-EB3) protein is Deoxyribose-phosphate aldolase.